The chain runs to 195 residues: MLSSYSMIRDSWKKLKKSDIYPVQKARMVSWRKSGSVVRLDYPTRLDRARSLGYKAKQGFIIVRSRVRKGGQHRPKIMGGRRPRRLAYNKLTVKKSIQLIAEERAADKYPNMEVLNSYYVGEDGLYKYYEVILIDRSSPAVLSDKNVSWIANSANKGRVYRGLTSAGYKSRGLGHGRLGSAKSRPSIRANGRLRR.

The interval 174–195 is disordered; that stretch reads GHGRLGSAKSRPSIRANGRLRR.

This sequence belongs to the eukaryotic ribosomal protein eL15 family.

The chain is Large ribosomal subunit protein eL15 from Picrophilus torridus (strain ATCC 700027 / DSM 9790 / JCM 10055 / NBRC 100828 / KAW 2/3).